A 391-amino-acid chain; its full sequence is Elongation factor Tu 2 (391 aa).

A tr-type G domain is found at 10–201 (KPHVNIGTIG…EVDRYIPTPE (192 aa)). Positions 19-26 (GHVDHGKT) are G1. GTP is bound at residue 19 to 26 (GHVDHGKT). Residue T26 participates in Mg(2+) binding. The segment at 55–59 (GITIS) is G2. Positions 76–79 (DCPG) are G3. GTP contacts are provided by residues 76 to 80 (DCPGH) and 131 to 134 (NKVD). Residues 131 to 134 (NKVD) form a G4 region. The interval 169-171 (SAL) is G5.

It belongs to the TRAFAC class translation factor GTPase superfamily. Classic translation factor GTPase family. EF-Tu/EF-1A subfamily. As to quaternary structure, monomer.

It localises to the cytoplasm. It catalyses the reaction GTP + H2O = GDP + phosphate + H(+). In terms of biological role, GTP hydrolase that promotes the GTP-dependent binding of aminoacyl-tRNA to the A-site of ribosomes during protein biosynthesis. This Bartonella bacilliformis (strain ATCC 35685 / KC583 / Herrer 020/F12,63) protein is Elongation factor Tu 2.